A 616-amino-acid polypeptide reads, in one-letter code: Chaperone protein HscA (616 aa).

This sequence belongs to the heat shock protein 70 family.

Its function is as follows. Chaperone involved in the maturation of iron-sulfur cluster-containing proteins. Has a low intrinsic ATPase activity which is markedly stimulated by HscB. Involved in the maturation of IscU. The polypeptide is Chaperone protein HscA (Pectobacterium carotovorum subsp. carotovorum (strain PC1)).